We begin with the raw amino-acid sequence, 382 residues long: Histidine biosynthesis bifunctional protein HisB (382 aa).

The histidinol-phosphatase stretch occupies residues 1-190 (MQKIVFIDRD…EIYEFLRLPA (190 aa)). The active-site Nucleophile is Asp8. 3 residues coordinate Mg(2+): Asp8, Asp10, and Asp129. Catalysis depends on Asp10, which acts as the Proton donor. An imidazoleglycerol-phosphate dehydratase region spans residues 191–382 (RTALVERNTK…DNLPSTKGVL (192 aa)).

It in the N-terminal section; belongs to the histidinol-phosphatase family. This sequence in the C-terminal section; belongs to the imidazoleglycerol-phosphate dehydratase family. The cofactor is Mg(2+).

It localises to the cytoplasm. It carries out the reaction D-erythro-1-(imidazol-4-yl)glycerol 3-phosphate = 3-(imidazol-4-yl)-2-oxopropyl phosphate + H2O. It catalyses the reaction L-histidinol phosphate + H2O = L-histidinol + phosphate. The protein operates within amino-acid biosynthesis; L-histidine biosynthesis; L-histidine from 5-phospho-alpha-D-ribose 1-diphosphate: step 6/9. It participates in amino-acid biosynthesis; L-histidine biosynthesis; L-histidine from 5-phospho-alpha-D-ribose 1-diphosphate: step 8/9. In Spirosoma linguale (strain ATCC 33905 / DSM 74 / LMG 10896 / Claus 1), this protein is Histidine biosynthesis bifunctional protein HisB.